Consider the following 451-residue polypeptide: Protein FAM117A (451 aa).

Residues 1–25 (MSGAAAGGRGGGSWGPGRGGAGGLR) show a composition bias toward gly residues. Disordered regions lie at residues 1–83 (MSGA…RPQP) and 164–183 (RTKL…VQGD). A phosphoserine mark is found at serine 29 and serine 67. The stretch at 149–175 (TDHRKEITKLKQQLQRTKLSRSGKEKE) forms a coiled coil. Phosphoserine is present on residues serine 193 and serine 213. Residues 242-293 (DGHRAPAPPQNSSCDHSLLLEPGNLTSSPSVPLASPQPPSQASREEHQGATE) are disordered. Phosphoserine is present on residues serine 318 and serine 326. Residue threonine 353 is modified to Phosphothreonine. A disordered region spans residues 403 to 451 (SPGSPLPTASPRAPRKGPEASKASSLPSEPWQRSPPSEESVLFQSSLVV). Phosphoserine is present on residues serine 412 and serine 426. Positions 436–451 (SPPSEESVLFQSSLVV) are enriched in polar residues.

Belongs to the FAM117 family.

The chain is Protein FAM117A (Fam117a) from Mus musculus (Mouse).